The chain runs to 722 residues: Endoglucanase F (722 aa).

The first 29 residues, 1-29, serve as a signal peptide directing secretion; that stretch reads MSKNFKRVGAVAVAAAMSLSIMATTSINA. Residues 142 to 165 form a disordered region; that stretch reads PEFQDPSKYPSPLDTSQPVGRDPI. Positions 154-165 are enriched in polar residues; sequence LDTSQPVGRDPI. The 62-residue stretch at 661–722 folds into the Dockerin domain; that stretch reads PEKLLGDVNG…LLKKALLSIQ (62 aa).

The protein belongs to the glycosyl hydrolase 48 (cellulase L) family.

The enzyme catalyses Endohydrolysis of (1-&gt;4)-beta-D-glucosidic linkages in cellulose, lichenin and cereal beta-D-glucans.. Probable endoglucanase involved in the degradation of cellulose or related beta-glucans. The polypeptide is Endoglucanase F (celCCF) (Ruminiclostridium cellulolyticum (strain ATCC 35319 / DSM 5812 / JCM 6584 / H10) (Clostridium cellulolyticum)).